The chain runs to 652 residues: Chaperone protein HtpG (652 aa).

The segment at 1–348 (MATDAHKETL…SDDLPLNVSR (348 aa)) is a; substrate-binding. The tract at residues 349–565 (ELLQHNPLLD…EYDFGMGMQR (217 aa)) is b. Positions 566 to 652 (LLKAAGHAMP…EAKSNAARGD (87 aa)) are c.

This sequence belongs to the heat shock protein 90 family. Homodimer.

It is found in the cytoplasm. Functionally, molecular chaperone. Has ATPase activity. This Alkalilimnicola ehrlichii (strain ATCC BAA-1101 / DSM 17681 / MLHE-1) protein is Chaperone protein HtpG.